We begin with the raw amino-acid sequence, 1123 residues long: MPRSLGNCQLNYSKERMWEPGYLKAKCAELRLESEFRLYRIRLWKSYLLTFFMLHIFVTSVHCALLLATIERRSIIYFDVALSIGCALVLILVLSVNFCDEFIAKHTWYMYASSIFASLTLVFADLTESIYHTYAHSWILGTFYDTYIIYMIYMFLPIHFISGAVLLALLVSGLYILYFVIFIAQGFAQFASALFSVGGMSVDIVHYLCLNLVGIFYRVMNDTVVRSSFLDRHQYIKEKIWLRNARLQEKQLLDSILPPQISLPLQKDIQGRIVMAKQGIHSWTAMERTMAIQIHPDVSILYADVVNYTHLTTTLTVEMLVKVLHDLYGRFDLAAYRYKVQRIKFLGDCYYCVAGLSDPDPDHANNCVILGLSMINHIMEVRDIHGLDINMRIGVHSGNLFAGVIGEAKLQFDIWGLDVTIANVLESTGVPGCVHISGATLNNLDVNRFDIEDGPEEARDHPLLKKYRIRSYIIRQDLHMDDEDSDEFLGDLHSISLCNMGAQPRISDSANQSLRALFHEELREEFRKMPVSAFSPKRLLGICRFNTGKEVPAHQNLNICLTFTDPILERAYLKQTDYMYKYSIILSASVGCSLVYIELMDTQMICSSCFVLPASVATIQCILALIAWYKKYCWTRYGRNNVPHHYNGFSCFIFRIHDKILNSLPIRICIYLFLMISSFFVMCLIVMSCQREEFEMAYIEERLFHYEQEAHICFHPWVTTNMLSLMICLTFTFAHIPIMVKTAVAILETLAYLLLIFFQFDFVFHHSVTTNPYFKSEYAHALLICITFLIMFVKERQIEFTNKVNFNWRVDLRKEENAASLTNHSIIIILNNILPSHIVDVYLNSLAKHELYFENYRMVSVMFAMLINFEMDLRSLRVLNEIIAEFDTLLLFYKEYYTVEKIKIVGCTYMAACGLDLNFAGSTSTNRKESIPPTEFNEEQSRRILFQQSNEDLDEVVFVMTSYALDMMRTLAKSNEAYQSIAGDRNITDGTIAIGISSGEVMAGIVGASQPHYDIWGNPVNMASRMESTGLPGHIHVTEETSEILQQFGITCSYRGMTFVKGRGKIPTYLVGIDENLNFIPQKATRFPSHQERSTVISLQSTYTHAENNNSIASTSRHTLQSL.

The Cytoplasmic portion of the chain corresponds to 1-47 (MPRSLGNCQLNYSKERMWEPGYLKAKCAELRLESEFRLYRIRLWKSY). Residues 48–68 (LLTFFMLHIFVTSVHCALLLA) traverse the membrane as a helical segment. Over 69–73 (TIERR) the chain is Extracellular. A helical membrane pass occupies residues 74–94 (SIIYFDVALSIGCALVLILVL). Topologically, residues 95-106 (SVNFCDEFIAKH) are cytoplasmic. A helical membrane pass occupies residues 107-127 (TWYMYASSIFASLTLVFADLT). Over 128 to 137 (ESIYHTYAHS) the chain is Extracellular. The helical transmembrane segment at 138-158 (WILGTFYDTYIIYMIYMFLPI) threads the bilayer. Topologically, residues 159–163 (HFISG) are cytoplasmic. The chain crosses the membrane as a helical span at residues 164-184 (AVLLALLVSGLYILYFVIFIA). Over 185 to 196 (QGFAQFASALFS) the chain is Extracellular. Residues 197–217 (VGGMSVDIVHYLCLNLVGIFY) form a helical membrane-spanning segment. Over 218 to 581 (RVMNDTVVRS…YLKQTDYMYK (364 aa)) the chain is Cytoplasmic. ATP is bound by residues 346–348 (LGD) and Arg-392. Asp-348 lines the Mg(2+) pocket. Residues 582-602 (YSIILSASVGCSLVYIELMDT) traverse the membrane as a helical segment. At 603–608 (QMICSS) the chain is on the extracellular side. Residues 609–629 (CFVLPASVATIQCILALIAWY) form a helical membrane-spanning segment. Topologically, residues 630–667 (KKYCWTRYGRNNVPHHYNGFSCFIFRIHDKILNSLPIR) are cytoplasmic. The helical transmembrane segment at 668-688 (ICIYLFLMISSFFVMCLIVMS) threads the bilayer. Over 689-719 (CQREEFEMAYIEERLFHYEQEAHICFHPWVT) the chain is Extracellular. Residues 720 to 740 (TNMLSLMICLTFTFAHIPIMV) form a helical membrane-spanning segment. Topologically, residues 741–743 (KTA) are cytoplasmic. A helical transmembrane segment spans residues 744–764 (VAILETLAYLLLIFFQFDFVF). At 765–772 (HHSVTTNP) the chain is on the extracellular side. Residues 773-793 (YFKSEYAHALLICITFLIMFV) traverse the membrane as a helical segment. Over 794 to 1123 (KERQIEFTNK…STSRHTLQSL (330 aa)) the chain is Cytoplasmic. ATP contacts are provided by residues Lys-903, 1014 to 1016 (DIW), 1021 to 1025 (NMASR), and Lys-1061.

It belongs to the adenylyl cyclase class-4/guanylyl cyclase family. In terms of tissue distribution, expressed in labella.

It is found in the membrane. It carries out the reaction ATP = 3',5'-cyclic AMP + diphosphate. Functionally, catalyzes the formation of the signaling molecule cAMP in response to G-protein signaling. This is Adenylyl cyclase X E from Drosophila melanogaster (Fruit fly).